The following is a 217-amino-acid chain: Adapter protein MecA (217 aa).

The protein belongs to the MecA family. In terms of assembly, homodimer.

Enables the recognition and targeting of unfolded and aggregated proteins to the ClpC protease or to other proteins involved in proteolysis. The sequence is that of Adapter protein MecA from Listeria monocytogenes serovar 1/2a (strain ATCC BAA-679 / EGD-e).